Consider the following 168-residue polypeptide: Large ribosomal subunit protein uL5 (168 aa).

It belongs to the universal ribosomal protein uL5 family. In terms of assembly, part of the 50S ribosomal subunit; contacts the 5S rRNA and probably tRNA. Forms a bridge to the 30S subunit in the 70S ribosome.

Its function is as follows. This is one of the proteins that bind and probably mediate the attachment of the 5S RNA into the large ribosomal subunit, where it forms part of the central protuberance. In the 70S ribosome it contacts protein S13 of the 30S subunit (bridge B1b), connecting the 2 subunits; this bridge is implicated in subunit movement. May contact the P site tRNA; the 5S rRNA and some of its associated proteins might help stabilize positioning of ribosome-bound tRNAs. The sequence is that of Large ribosomal subunit protein uL5 from Methanosphaera stadtmanae (strain ATCC 43021 / DSM 3091 / JCM 11832 / MCB-3).